A 421-amino-acid polypeptide reads, in one-letter code: Hemagglutinin-esterase (421 aa).

Residues 1 to 16 (MFLLPRFILVSCIIGS) form the signal peptide. Positions 7–127 (FILVSCIIGS…SNDIWMQNKG (121 aa)) are esterase domain 1. The Virion surface segment spans residues 17–392 (LGFDNPPTNV…PICVYDPLPL (376 aa)). The active-site Nucleophile is serine 40. A disulfide bond links cysteine 44 and cysteine 65. N-linked (GlcNAc...) asparagine; by host glycans are attached at residues asparagine 54, asparagine 89, asparagine 153, asparagine 236, and asparagine 301. 3 cysteine pairs are disulfide-bonded: cysteine 113/cysteine 162, cysteine 197/cysteine 276, and cysteine 205/cysteine 249. Residues 128–266 (LFYTQVYKNM…GNYLAISNEL (139 aa)) are receptor binding. Positions 267–379 (LLTVPTKAIC…RCPTAADINT (113 aa)) are esterase domain 2. A disulfide bridge links cysteine 307 with cysteine 312. An N-linked (GlcNAc...) asparagine; by host glycan is attached at asparagine 316. Catalysis depends on charge relay system residues aspartate 326 and histidine 329. A disulfide bond links cysteine 347 and cysteine 371. N-linked (GlcNAc...) asparagine; by host glycosylation occurs at asparagine 358. A helical transmembrane segment spans residues 393–413 (ILLGILLGVAVIIIVVLLLYF). Residues 414 to 421 (MVENGTRL) are Intravirion-facing. N-linked (GlcNAc...) asparagine; by host glycosylation is present at asparagine 417.

Belongs to the influenza type C/coronaviruses hemagglutinin-esterase family. In terms of assembly, homodimer; disulfide-linked. Forms a complex with the M protein in the pre-Golgi. Associates then with S-M complex to form a ternary complex S-M-HE. Post-translationally, N-glycosylated in the host RER.

The protein resides in the virion membrane. Its subcellular location is the host cell membrane. The enzyme catalyses N-acetyl-9-O-acetylneuraminate + H2O = N-acetylneuraminate + acetate + H(+). It carries out the reaction N-acetyl-4-O-acetylneuraminate + H2O = N-acetylneuraminate + acetate + H(+). In terms of biological role, structural protein that makes short spikes at the surface of the virus. Contains receptor binding and receptor-destroying activities. Mediates de-O-acetylation of N-acetyl-4-O-acetylneuraminic acid, which is probably the receptor determinant recognized by the virus on the surface of erythrocytes and susceptible cells. This receptor-destroying activity is important for virus release as it probably helps preventing self-aggregation and ensures the efficient spread of the progeny virus from cell to cell. May serve as a secondary viral attachment protein for initiating infection, the spike protein being the major one. May become a target for both the humoral and the cellular branches of the immune system. In Bos taurus (Bovine), this protein is Hemagglutinin-esterase.